Here is an 806-residue protein sequence, read N- to C-terminus: Putative phage-related protein YobO (806 aa).

Residues 1 to 23 are disordered; that stretch reads MVHFKNCPDPSLNANSQSHPEFS. Over residues 12 to 21 the composition is skewed to polar residues; sequence LNANSQSHPE. PbH1 repeat units follow at residues 199–221, 237–259, 260–292, 294–315, 419–441, and 448–470; these read VEYG…DITS, SRYI…TTHY, SEYI…EIDD, SRHV…EVKA, SQNI…DINL, and TDYI…SIGG.

The polypeptide is Putative phage-related protein YobO (yobO) (Bacillus subtilis (strain 168)).